Here is a 175-residue protein sequence, read N- to C-terminus: Large ribosomal subunit protein uL10 (175 aa).

It belongs to the universal ribosomal protein uL10 family. As to quaternary structure, part of the ribosomal stalk of the 50S ribosomal subunit. The N-terminus interacts with L11 and the large rRNA to form the base of the stalk. The C-terminus forms an elongated spine to which L12 dimers bind in a sequential fashion forming a multimeric L10(L12)X complex.

Its function is as follows. Forms part of the ribosomal stalk, playing a central role in the interaction of the ribosome with GTP-bound translation factors. This chain is Large ribosomal subunit protein uL10, found in Prochlorococcus marinus (strain MIT 9301).